We begin with the raw amino-acid sequence, 146 residues long: Zinc metalloproteinase-disintegrin salmosin-3 (146 aa).

The region spanning 1-57 is the Peptidase M12B domain; the sequence is SCPCDANSCIMSATLSNEPSSRFSDCSFSLPSRFSDCSFNQYSSDIIHYHECLLNEP. 9 disulfides stabilise this stretch: C2-C37, C4-C9, C68-C87, C79-C97, C81-C92, C91-C114, C105-C111, C110-C135, and C123-C142. The Disintegrin domain occupies 65–146; that stretch reads PPVCGNYYPE…GQSGVCPRNT (82 aa). A Cell attachment site motif is present at residues 127–129; that stretch reads RGD.

The protein belongs to the venom metalloproteinase (M12B) family. P-II subfamily. P-IIb sub-subfamily. As to quaternary structure, monomer (disintegrin). The cofactor is Zn(2+). In terms of tissue distribution, expressed by the venom gland.

It localises to the secreted. Its function is as follows. Snake venom zinc metalloproteinase that inhibits ADP-induced platelet aggregation (probably by binding integrin alpha-IIb/beta-3 (ITGA2B/ITGB3)) and degrades fibrinogen. The polypeptide is Zinc metalloproteinase-disintegrin salmosin-3 (Gloydius brevicauda (Korean slamosa snake)).